We begin with the raw amino-acid sequence, 320 residues long: Homoserine kinase (320 aa).

Residue 100-110 (PLSSGMGSSAA) participates in ATP binding.

This sequence belongs to the GHMP kinase family. Homoserine kinase subfamily.

The protein localises to the cytoplasm. It carries out the reaction L-homoserine + ATP = O-phospho-L-homoserine + ADP + H(+). Its pathway is amino-acid biosynthesis; L-threonine biosynthesis; L-threonine from L-aspartate: step 4/5. Its function is as follows. Catalyzes the ATP-dependent phosphorylation of L-homoserine to L-homoserine phosphate. The protein is Homoserine kinase of Chlorobium phaeobacteroides (strain BS1).